Here is a 916-residue protein sequence, read N- to C-terminus: Nitrate reductase [NADH] 1 (916 aa).

A disordered region spans residues 1-77 (MAASVQPRQF…DDEEEEQEDW (77 aa)). A compositionally biased stretch (acidic residues) spans 66 to 76 (GSDDEEEEQED). C192 is a binding site for Mo-molybdopterin. Residues 541-616 (GKQFTMSEVR…LDTYRIGELI (76 aa)) form the Cytochrome b5 heme-binding domain. The heme site is built by H576 and H599. An FAD-binding FR-type domain is found at 656-768 (RDKVPCQLVD…KGPLGHVEYT (113 aa)). FAD is bound by residues 708-711 (RAYT), 725-729 (LIKVY), F730, F737, 742-744 (LMT), S792, and T795.

It belongs to the nitrate reductase family. As to quaternary structure, homodimer. FAD is required as a cofactor. Requires heme as cofactor. It depends on Mo-molybdopterin as a cofactor.

It catalyses the reaction nitrite + NAD(+) + H2O = nitrate + NADH + H(+). Functionally, nitrate reductase is a key enzyme involved in the first step of nitrate assimilation in plants, fungi and bacteria. This chain is Nitrate reductase [NADH] 1 (NIA1), found in Oryza sativa subsp. japonica (Rice).